Here is a 265-residue protein sequence, read N- to C-terminus: Hydroxyethylthiazole kinase (265 aa).

Met55 provides a ligand contact to substrate. ATP is bound by residues Arg130 and Ser176. A substrate-binding site is contributed by Gly203.

This sequence belongs to the Thz kinase family. The cofactor is Mg(2+).

It catalyses the reaction 5-(2-hydroxyethyl)-4-methylthiazole + ATP = 4-methyl-5-(2-phosphooxyethyl)-thiazole + ADP + H(+). It participates in cofactor biosynthesis; thiamine diphosphate biosynthesis; 4-methyl-5-(2-phosphoethyl)-thiazole from 5-(2-hydroxyethyl)-4-methylthiazole: step 1/1. Catalyzes the phosphorylation of the hydroxyl group of 4-methyl-5-beta-hydroxyethylthiazole (THZ). The protein is Hydroxyethylthiazole kinase of Leptospira interrogans serogroup Icterohaemorrhagiae serovar Lai (strain 56601).